Here is an 85-residue protein sequence, read N- to C-terminus: MQAARFVVSGVVQGVYYRACTRQRAVALGLVGHARNQADGSVDVVAAGSAAALDALEAWLCRARRPPRSRRSRARPARFRRLKTL.

Positions 3–85 constitute an Acylphosphatase-like domain; sequence AARFVVSGVV…PARFRRLKTL (83 aa). Active-site residues include Arg-18 and Asn-36. A disordered region spans residues 66-85; sequence PPRSRRSRARPARFRRLKTL.

It belongs to the acylphosphatase family.

It carries out the reaction an acyl phosphate + H2O = a carboxylate + phosphate + H(+). The sequence is that of Acylphosphatase (acyP) from Xanthomonas axonopodis pv. citri (strain 306).